Here is a 249-residue protein sequence, read N- to C-terminus: Imidazole glycerol phosphate synthase subunit HisF (249 aa).

Catalysis depends on residues aspartate 11 and aspartate 130.

This sequence belongs to the HisA/HisF family. In terms of assembly, heterodimer of HisH and HisF.

It localises to the cytoplasm. It carries out the reaction 5-[(5-phospho-1-deoxy-D-ribulos-1-ylimino)methylamino]-1-(5-phospho-beta-D-ribosyl)imidazole-4-carboxamide + L-glutamine = D-erythro-1-(imidazol-4-yl)glycerol 3-phosphate + 5-amino-1-(5-phospho-beta-D-ribosyl)imidazole-4-carboxamide + L-glutamate + H(+). It participates in amino-acid biosynthesis; L-histidine biosynthesis; L-histidine from 5-phospho-alpha-D-ribose 1-diphosphate: step 5/9. Its function is as follows. IGPS catalyzes the conversion of PRFAR and glutamine to IGP, AICAR and glutamate. The HisF subunit catalyzes the cyclization activity that produces IGP and AICAR from PRFAR using the ammonia provided by the HisH subunit. The sequence is that of Imidazole glycerol phosphate synthase subunit HisF from Sulfolobus acidocaldarius (strain ATCC 33909 / DSM 639 / JCM 8929 / NBRC 15157 / NCIMB 11770).